A 371-amino-acid chain; its full sequence is Cyanide hydratase (371 aa).

The CN hydrolase domain maps to 6–285 (YKAAAVTSEP…DGLLYVDIDL (280 aa)). The active-site Proton acceptor is the Glu-46. Residue Lys-128 is part of the active site. Cys-163 serves as the catalytic Nucleophile. The span at 339–353 (GLNRPLDPPKDERHG) shows a compositional bias: basic and acidic residues. The segment at 339 to 371 (GLNRPLDPPKDERHGIVGVAGQKSAEQRKAGDL) is disordered.

The protein belongs to the carbon-nitrogen hydrolase superfamily. Nitrilase family. As to quaternary structure, oligomer of dimers, forming left-handed helical fibers.

It catalyses the reaction formamide = hydrogen cyanide + H2O. Functionally, catalyzes the hydration of cyanide to formamide. Degradation of cyanide may be important for plant pathogenic fungi in infection of cyanogenic plants. Also acts on 2-cyanopyridine, fumaronitrile and benzonitrile, albeit at a lower rate. The polypeptide is Cyanide hydratase (nit) (Stereum hirsutum (strain FP-91666) (White-rot fungus)).